Here is a 4034-residue protein sequence, read N- to C-terminus: Polyketide synthase-nonribosomal peptide synthetase ACE1 (4034 aa).

The Ketosynthase family 3 (KS3) domain maps to 10–448 (TEPIAIIGSG…GANAHVILES (439 aa)). Active-site for beta-ketoacyl synthase activity residues include cysteine 183, histidine 322, and histidine 368. The tract at residues 560-879 (VFTGQGAQWA…PYFGCLSRGT (320 aa)) is acyl transferase. Positions 951–1082 (NELLGTRLPD…GDLVVLLGEP (132 aa)) are N-terminal hotdog fold. A PKS/mFAS DH domain is found at 951 to 1257 (NELLGTRLPD…TKPLSPPSAA (307 aa)). The tract at residues 952–1252 (ELLGTRLPDD…LQGLHTKPLS (301 aa)) is dehydratase (DH) domain. Catalysis depends on histidine 983, which acts as the Proton acceptor; for dehydratase activity. The C-terminal hotdog fold stretch occupies residues 1097–1257 (MKDIDEERFY…TKPLSPPSAA (161 aa)). The Proton donor; for dehydratase activity role is filled by aspartate 1157. Residues 1396-1594 (NMLNRFYSDA…SGADIVTPHH (199 aa)) are methyltransferase (MT) domain. The tract at residues 2144 to 2317 (TYWLVGLTGG…AGSSVEIGCI (174 aa)) is ketoreductase (KR)domain. Positions 2424–2505 (KSSEEVLDIL…LLLEFVQGLI (82 aa)) constitute a Carrier 1 domain. Serine 2465 bears the O-(pantetheine 4'-phosphoryl)serine mark. Residues 2512 to 2598 (KLDGSDGADA…SPTTSASMAS (87 aa)) form a disordered region. A compositionally biased stretch (low complexity) spans 2556-2577 (PSGPASPTSPSSATASPGRSRS). Polar residues predominate over residues 2586 to 2598 (TPVSPTTSASMAS). The tract at residues 2608–3037 (TVPVSFGQSR…ATSLNRPAIY (430 aa)) is condensation. The adenylation stretch occupies residues 3073–3473 (KYATKFALRN…GGLIIEGRID (401 aa)). The 81-residue stretch at 3598 to 3678 (AELGSDQARM…AMTDLVLSDD (81 aa)) folds into the Carrier 2 domain. An O-(pantetheine 4'-phosphoryl)serine modification is found at serine 3638. A reductase-like region spans residues 3719–3944 (LTGATGFLGR…DFVSVENVAA (226 aa)).

The protein belongs to the NRP synthetase family.

It localises to the cytoplasm. The protein operates within secondary metabolite biosynthesis. In terms of biological role, hybrid PKS-NRPS synthetase; part of the gene cluster that mediates the biosynthesis of a tyrosine-derived cytochalasan acting as a fungal signal recognized by resistant rice plants and leads to avirulence in Pi33 resistant rice cultivars. The first step in the pathway is catalyzed by the hybrid PKS-NRPS ACE1, assisted by the enoyl reductase RAP1, that are responsible for fusion of the tyrosine precursor and the polyketide backbone. The polyketide synthase module (PKS) of ACE1 is responsible for the synthesis of the polyketide backbone and the downstream nonribosomal peptide synthetase (NRPS) amidates the carboxyl end of the polyketide with the tyrosine precursor. Because ACE1 lacks a designated enoylreductase (ER) domain, the required activity is provided the enoyl reductase RAP1. Reduction by the hydrolyase ORFZ, followed by dehydration and intra-molecular Diels-Alder cyclization by the Diels-Alderase ORF3 then yield the required isoindolone-fused macrocycle. A number of oxidative steps catalyzed by the tailoring enzymes identified within the cluster, including cytochrome P450 monooxygenases CYP1 to CYP4, the FAD-linked oxidoreductase OXR2 and the short-chain dehydrogenase/reductase OXR1, are further required to afford the final cytochalasans that confer avirulence and which have still to be identified. The monooxygenase CYP1 has been shown to be a site-selective C-18 hydroxylase whereas the function of CYP3 is the site-selective epoxidation of the C-6/C-7 olefin that is present in some intermediate compounds. Finally, SYN2 and RAP2 are not required for avirulence in Pi33 resistant rice cultivars. The chain is Polyketide synthase-nonribosomal peptide synthetase ACE1 from Pyricularia oryzae (strain 70-15 / ATCC MYA-4617 / FGSC 8958) (Rice blast fungus).